The chain runs to 292 residues: Polyketide transferase af380 (292 aa).

An abhydrolase domain region spans residues 46 to 267; that stretch reads DVAVWFQQQG…FDLVAGRGHM (222 aa).

Belongs to the polyketide transferase af380 family.

The catalysed reaction is fumagillol + dodecapentaneoyl-[polyketide synthase] = prefumagillin + holo-[polyketide synthase]. It functions in the pathway secondary metabolite biosynthesis; terpenoid biosynthesis. Polyketide transferase; part of the gene cluster that mediates the biosynthesis of fumagillin, a meroterpenoid that has numerous biological activities including irreversible inhibition of human type 2 methionine aminopeptidase (METAP2). Within the pathway, the polyketide transferase af380 catalyzes the transfer of a dodecapentaenoyl group synthesized by the polyketide synthase af370 onto 5R-hydroxy-seco-sesquiterpene to produce prefumagillin. The pathway begins with the conversion of farnesyl pyrophosphate (FPP) to beta-trans-bergamotene by the membrane-bound beta-trans-bergamotene synthase af520. The multifunctional cytochrome P450 monooxygenase af510 then converts beta-trans-bergamotene into 5-keto-demethoxyfumagillol via several oxydation steps. 5-keto-demethoxyfumagillol is then subjected to successive C-6 hydroxylation and O-methylation by the dioxygenase af480 and O-methyltransferase af390-400, respectively, to yield 5-keto-fumagillol, which is then stereoselectively reduced by the keto-reductase af490 to 5R-hydroxy-seco-sesquiterpene. The next step is the polyketide transferase af380-catalyzed transfer of a dodecapentaenoyl group synthesized by the polyketide synthase af370 onto 5R-hydroxy-seco-sesquiterpene which leads to the production of prefumagillin. Finally, oxidative cleavage by the monooxygenase af470 converts prefumagillin to fumagillin. The sequence is that of Polyketide transferase af380 from Aspergillus fumigatus (strain ATCC MYA-4609 / CBS 101355 / FGSC A1100 / Af293) (Neosartorya fumigata).